Reading from the N-terminus, the 638-residue chain is Carbon monoxide dehydrogenase (638 aa).

C46, C55, C58, C63, and C74 together coordinate [4Fe-4S] cluster. The [Ni-4Fe-5S] cluster site is built by H265, C299, C343, C452, C483, and C524.

Belongs to the Ni-containing carbon monoxide dehydrogenase family. In terms of assembly, homodimer. Requires [4Fe-4S] cluster as cofactor. The cofactor is [Ni-4Fe-5S] cluster.

The enzyme catalyses CO + 2 oxidized [2Fe-2S]-[ferredoxin] + H2O = 2 reduced [2Fe-2S]-[ferredoxin] + CO2 + 2 H(+). In terms of biological role, CODH oxidizes carbon monoxide coupled, via CooF, to the reduction of a hydrogen cation by a hydrogenase (possibly CooH). This is Carbon monoxide dehydrogenase (cooS) from Methanopyrus kandleri (strain AV19 / DSM 6324 / JCM 9639 / NBRC 100938).